We begin with the raw amino-acid sequence, 155 residues long: SsrA-binding protein (155 aa).

The protein belongs to the SmpB family.

The protein resides in the cytoplasm. Required for rescue of stalled ribosomes mediated by trans-translation. Binds to transfer-messenger RNA (tmRNA), required for stable association of tmRNA with ribosomes. tmRNA and SmpB together mimic tRNA shape, replacing the anticodon stem-loop with SmpB. tmRNA is encoded by the ssrA gene; the 2 termini fold to resemble tRNA(Ala) and it encodes a 'tag peptide', a short internal open reading frame. During trans-translation Ala-aminoacylated tmRNA acts like a tRNA, entering the A-site of stalled ribosomes, displacing the stalled mRNA. The ribosome then switches to translate the ORF on the tmRNA; the nascent peptide is terminated with the 'tag peptide' encoded by the tmRNA and targeted for degradation. The ribosome is freed to recommence translation, which seems to be the essential function of trans-translation. The polypeptide is SsrA-binding protein (Bacillus mycoides (strain KBAB4) (Bacillus weihenstephanensis)).